The sequence spans 122 residues: Large ribosomal subunit protein uL14 (122 aa).

This sequence belongs to the universal ribosomal protein uL14 family. In terms of assembly, part of the 50S ribosomal subunit. Forms a cluster with proteins L3 and L19. In the 70S ribosome, L14 and L19 interact and together make contacts with the 16S rRNA in bridges B5 and B8.

In terms of biological role, binds to 23S rRNA. Forms part of two intersubunit bridges in the 70S ribosome. This Hahella chejuensis (strain KCTC 2396) protein is Large ribosomal subunit protein uL14.